A 379-amino-acid chain; its full sequence is Cytochrome b (379 aa).

Transmembrane regions (helical) follow at residues 33 to 53 (FGSL…FLAM), 77 to 98 (WMIR…FIHI), 113 to 133 (WNIG…GYVL), and 178 to 198 (FFAF…VHLL). Heme b-binding residues include His-83 and His-97. Heme b-binding residues include His-182 and His-196. His-201 contributes to the a ubiquinone binding site. A run of 4 helical transmembrane segments spans residues 226–246 (MKDI…VLFY), 288–308 (LGGV…PMMH), 320–340 (LSQC…WIGG), and 347–367 (FIMI…IIMP).

This sequence belongs to the cytochrome b family. In terms of assembly, the cytochrome bc1 complex contains 11 subunits: 3 respiratory subunits (MT-CYB, CYC1 and UQCRFS1), 2 core proteins (UQCRC1 and UQCRC2) and 6 low-molecular weight proteins (UQCRH/QCR6, UQCRB/QCR7, UQCRQ/QCR8, UQCR10/QCR9, UQCR11/QCR10 and a cleavage product of UQCRFS1). This cytochrome bc1 complex then forms a dimer. The cofactor is heme b.

It is found in the mitochondrion inner membrane. Its function is as follows. Component of the ubiquinol-cytochrome c reductase complex (complex III or cytochrome b-c1 complex) that is part of the mitochondrial respiratory chain. The b-c1 complex mediates electron transfer from ubiquinol to cytochrome c. Contributes to the generation of a proton gradient across the mitochondrial membrane that is then used for ATP synthesis. The chain is Cytochrome b (MT-CYB) from Massoutiera mzabi (Mzab gundi).